Reading from the N-terminus, the 350-residue chain is tRNA dimethylallyltransferase (350 aa).

The disordered stretch occupies residues 1 to 20; that stretch reads MMNTERPAGPLRPPHPPHPP. Positions 10–20 are enriched in pro residues; that stretch reads PLRPPHPPHPP. 27–34 serves as a coordination point for ATP; it reads GPTASGKT. A substrate-binding site is contributed by 29–34; that stretch reads TASGKT. Interaction with substrate tRNA regions lie at residues 52 to 55, 176 to 180, and 273 to 278; these read DSAL, QRIAR, and RCVGYR.

It belongs to the IPP transferase family. In terms of assembly, monomer. Requires Mg(2+) as cofactor.

It catalyses the reaction adenosine(37) in tRNA + dimethylallyl diphosphate = N(6)-dimethylallyladenosine(37) in tRNA + diphosphate. Catalyzes the transfer of a dimethylallyl group onto the adenine at position 37 in tRNAs that read codons beginning with uridine, leading to the formation of N6-(dimethylallyl)adenosine (i(6)A). This chain is tRNA dimethylallyltransferase, found in Albidiferax ferrireducens (strain ATCC BAA-621 / DSM 15236 / T118) (Rhodoferax ferrireducens).